Reading from the N-terminus, the 131-residue chain is Profilin-3 (131 aa).

This sequence belongs to the profilin family. As to quaternary structure, occurs in many kinds of cells as a complex with monomeric actin in a 1:1 ratio.

The protein localises to the cytoplasm. The protein resides in the cytoskeleton. Binds to actin and affects the structure of the cytoskeleton. At high concentrations, profilin prevents the polymerization of actin, whereas it enhances it at low concentrations. By binding to PIP2, it inhibits the formation of IP3 and DG. This chain is Profilin-3, found in Malus domestica (Apple).